The chain runs to 258 residues: Kallikrein-1 (258 aa).

The N-terminal stretch at 1–18 (MWFLVLCLALSLGGTGAA) is a signal peptide. The propeptide at 19–24 (PPIQSR) is activation peptide. One can recognise a Peptidase S1 domain in the interval 25-255 (IVGGWECSQP…YVKWIEDTIA (231 aa)). 5 cysteine pairs are disulfide-bonded: C31–C170, C47–C63, C149–C216, C181–C195, and C206–C231. Residue H62 is the Charge relay system of the active site. O-linked (GalNAc...) serine glycosylation occurs at S90. N99 is a glycosylation site (N-linked (GlcNAc...) asparagine). S101 is a glycosylation site (O-linked (GalNAc...) serine). The N-linked (GlcNAc...) asparagine glycan is linked to N105. Catalysis depends on D117, which acts as the Charge relay system. N-linked (GlcNAc...) asparagine glycosylation is present at N161. O-linked (GalNAc...) serine glycosylation is present at S163. Residue S210 is the Charge relay system of the active site.

This sequence belongs to the peptidase S1 family. Kallikrein subfamily.

The catalysed reaction is Preferential cleavage of Arg-|-Xaa bonds in small molecule substrates. Highly selective action to release kallidin (lysyl-bradykinin) from kininogen involves hydrolysis of Met-|-Xaa or Leu-|-Xaa.. Glandular kallikreins cleave Met-Lys and Arg-Ser bonds in kininogen to release Lys-bradykinin. This chain is Kallikrein-1 (KLK1), found in Papio hamadryas (Hamadryas baboon).